A 257-amino-acid chain; its full sequence is 3-deoxy-manno-octulosonate cytidylyltransferase (257 aa).

The protein belongs to the KdsB family.

It is found in the cytoplasm. It catalyses the reaction 3-deoxy-alpha-D-manno-oct-2-ulosonate + CTP = CMP-3-deoxy-beta-D-manno-octulosonate + diphosphate. The protein operates within nucleotide-sugar biosynthesis; CMP-3-deoxy-D-manno-octulosonate biosynthesis; CMP-3-deoxy-D-manno-octulosonate from 3-deoxy-D-manno-octulosonate and CTP: step 1/1. It participates in bacterial outer membrane biogenesis; lipopolysaccharide biosynthesis. Functionally, activates KDO (a required 8-carbon sugar) for incorporation into bacterial lipopolysaccharide in Gram-negative bacteria. This is 3-deoxy-manno-octulosonate cytidylyltransferase from Stenotrophomonas maltophilia (strain R551-3).